The primary structure comprises 792 residues: Ubiquitin carboxyl-terminal hydrolase 10 (792 aa).

N-acetylalanine is present on Ala2. An interaction with p53/TP53 region spans residues 2–99; sequence ALHNPQYIFG…ILGCTTSKKI (98 aa). A G3BP1-binding region spans residues 6 to 21; the sequence is PQYIFGDFSPDEFNQF. Thr24 bears the Phosphothreonine mark. A disordered region spans residues 126-164; sequence SNAEAETLENDSGAGGLGQRERKKKKKRPPGYYSYLKDG. A phosphoserine mark is found at Ser208 and Ser223. Basic and acidic residues predominate over residues 300–309; it reads DEGADLDPAK. Residues 300–323 are disordered; it reads DEGADLDPAKPESQSPPAESALSA. Position 314 is a phosphoserine (Ser314). Position 330 is a phosphoserine; by ATM (Ser330). Residues 350-369 are disordered; sequence PMAYVETKCSPPVPSPLASE. A phosphoserine mark is found at Ser359 and Ser364. The 381-residue stretch at 409–789 folds into the USP domain; sequence RGLINKGNWC…TAYLLYYRRV (381 aa). Cys418 functions as the Nucleophile in the catalytic mechanism. A Phosphoserine modification is found at Ser541. The interval 542 to 580 is disordered; it reads PTHEKHSVSNGPRSDLIEDEELEDTGKGSEDEWEQVGPK. At Thr566 the chain carries Phosphothreonine. Ser570 is subject to Phosphoserine. Residue His743 is the Proton acceptor of the active site.

Belongs to the peptidase C19 family. USP10 subfamily. As to quaternary structure, found in a deubiquitination complex with TANK, USP10 and ZC3H12A; this complex inhibits genotoxic stress- or interleukin-1-beta (IL1B)-mediated NF-kappa-B activation by promoting IKBKG or TRAF6 deubiquitination. Interacts with IKBKG; this interaction increases in response to DNA damage. Interacts with TANK; this interaction increases in response to DNA damage. Interacts with TRAF6; this interaction increases in response to DNA damage. Interacts with ZC3H12A; this interaction increases in response to DNA damage. Interacts with G3BP1 (via NTF2 domain) and G3BP2 (via NTF2 domain); inhibiting stress granule formation. In terms of processing, phosphorylated by ATM following DNA damage, leading to stabilization and translocation it to the nucleus. Ubiquitinated. Deubiquitinated by USP13.

It is found in the cytoplasm. It localises to the nucleus. Its subcellular location is the early endosome. The catalysed reaction is Thiol-dependent hydrolysis of ester, thioester, amide, peptide and isopeptide bonds formed by the C-terminal Gly of ubiquitin (a 76-residue protein attached to proteins as an intracellular targeting signal).. Specifically inhibited by spautin-1 (specific and potent autophagy inhibitor-1), a derivative of MBCQ that binds to USP10 and inhibits deubiquitinase activity. Regulated by PIK3C3/VPS34-containing complexes. Hydrolase that can remove conjugated ubiquitin from target proteins such as p53/TP53, RPS2/us5, RPS3/us3, RPS10/eS10, BECN1, SNX3 and CFTR. Acts as an essential regulator of p53/TP53 stability: in unstressed cells, specifically deubiquitinates p53/TP53 in the cytoplasm, leading to counteract MDM2 action and stabilize p53/TP53. Following DNA damage, translocates to the nucleus and deubiquitinates p53/TP53, leading to regulate the p53/TP53-dependent DNA damage response. Component of a regulatory loop that controls autophagy and p53/TP53 levels: mediates deubiquitination of BECN1, a key regulator of autophagy, leading to stabilize the PIK3C3/VPS34-containing complexes. In turn, PIK3C3/VPS34-containing complexes regulate USP10 stability, suggesting the existence of a regulatory system by which PIK3C3/VPS34-containing complexes regulate p53/TP53 protein levels via USP10 and USP13. Does not deubiquitinate MDM2. Plays a key role in 40S ribosome subunit recycling when a ribosome has stalled during translation: acts both by inhibiting formation of stress granules, which store stalled translation pre-initiation complexes, and mediating deubiquitination of 40S ribosome subunits. Acts as a negative regulator of stress granules formation by lowering G3BP1 and G3BP2 valence, thereby preventing G3BP1 and G3BP2 ability to undergo liquid-liquid phase separation (LLPS) and assembly of stress granules. Promotes 40S ribosome subunit recycling following ribosome dissociation in response to ribosome stalling by mediating deubiquitination of 40S ribosomal proteins RPS2/us5, RPS3/us3 and RPS10/eS10, thereby preventing their degradation by the proteasome. Part of a ribosome quality control that takes place when ribosomes have stalled during translation initiation (iRQC): USP10 acts by removing monoubiquitination of RPS2/us5 and RPS3/us3, promoting 40S ribosomal subunit recycling. Deubiquitinates CFTR in early endosomes, enhancing its endocytic recycling. Involved in a TANK-dependent negative feedback response to attenuate NF-kappa-B activation via deubiquitinating IKBKG or TRAF6 in response to interleukin-1-beta (IL1B) stimulation or upon DNA damage. Deubiquitinates TBX21 leading to its stabilization. Plays a negative role in the RLR signaling pathway upon RNA virus infection by blocking the RIGI-mediated MAVS activation. Mechanistically, removes the unanchored 'Lys-63'-linked polyubiquitin chains of MAVS to inhibit its aggregation, essential for its activation. The sequence is that of Ubiquitin carboxyl-terminal hydrolase 10 (Usp10) from Mus musculus (Mouse).